Consider the following 203-residue polypeptide: Protein GrpE (203 aa).

It belongs to the GrpE family. In terms of assembly, homodimer.

It localises to the cytoplasm. In terms of biological role, participates actively in the response to hyperosmotic and heat shock by preventing the aggregation of stress-denatured proteins, in association with DnaK and GrpE. It is the nucleotide exchange factor for DnaK and may function as a thermosensor. Unfolded proteins bind initially to DnaJ; upon interaction with the DnaJ-bound protein, DnaK hydrolyzes its bound ATP, resulting in the formation of a stable complex. GrpE releases ADP from DnaK; ATP binding to DnaK triggers the release of the substrate protein, thus completing the reaction cycle. Several rounds of ATP-dependent interactions between DnaJ, DnaK and GrpE are required for fully efficient folding. This is Protein GrpE from Pseudoalteromonas translucida (strain TAC 125).